A 159-amino-acid polypeptide reads, in one-letter code: Small ribosomal subunit protein uS9 (159 aa).

It belongs to the universal ribosomal protein uS9 family.

This is Small ribosomal subunit protein uS9 from Bradyrhizobium diazoefficiens (strain JCM 10833 / BCRC 13528 / IAM 13628 / NBRC 14792 / USDA 110).